We begin with the raw amino-acid sequence, 337 residues long: MLARFERYPLTFGPTPIERLSRLSAHLGGKVDLYAKREDCNSGLAFGGNKLRKLEYIVPDAIASGADTLVSIGGVQSNHTRMVAAVAAKIGMKCRLVQEAWVPHEDAVYDRVGNIMLSRIMGADVRLVEDGFDIGIRSSWEQAIAEVKAAGGKPYAIPAGASVHKYGGLGYVGFAEEVRAQERELGFAFDYIVVCTVTGSTHAGMLVGFAKDGRERRVIGIDASATPAQTRAQVLEIARRTADLVDLGRELSADDVVLNEDYAYPIYGVPSAETKEAIRLCGRLEGMITDPVYEGKSMQGMIDLVRKGFFPAGAKVLYAHLGGAPALNGYAYAFRNG.

Lysine 50 carries the N6-(pyridoxal phosphate)lysine modification. Serine 77 serves as the catalytic Nucleophile.

It belongs to the ACC deaminase/D-cysteine desulfhydrase family. Homotrimer. It depends on pyridoxal 5'-phosphate as a cofactor.

It catalyses the reaction 1-aminocyclopropane-1-carboxylate + H2O = 2-oxobutanoate + NH4(+). Functionally, catalyzes a cyclopropane ring-opening reaction, the irreversible conversion of 1-aminocyclopropane-1-carboxylate (ACC) to ammonia and alpha-ketobutyrate. Allows growth on ACC as a nitrogen source. The protein is 1-aminocyclopropane-1-carboxylate deaminase of Methylobacterium sp. (strain 4-46).